Reading from the N-terminus, the 409-residue chain is Indian hedgehog protein (409 aa).

An N-terminal signal peptide occupies residues 1–23 (MQLPKVVLLLCAAALLLSGAVRG). The N-palmitoyl cysteine moiety is linked to residue Cys-24. Ca(2+)-binding residues include Glu-89, Glu-90, Asp-95, Thr-125, Glu-126, Asp-129, and Asp-131. 3 residues coordinate Zn(2+): His-140, Asp-147, and His-182. Gly-197 carries the Cholesterol glycine ester lipid modification.

The protein belongs to the hedgehog family. In terms of assembly, multimer. As to quaternary structure, interacts with BOC and CDON. Interacts with PTCH1. Interacts with glypican GPC3. In terms of processing, cholesterylation is required for N-product targeting to lipid rafts and multimerization. Post-translationally, the C-terminal domain displays an autoproteolysis activity and a cholesterol transferase activity. Both activities result in the cleavage of the full-length protein and covalent attachment of a cholesterol moiety to the C-terminal of the newly generated N-product. The N-product is the active species in both local and long-range signaling, whereas the C-product is degraded in the endoplasmic reticulum. N-palmitoylation by HHAT of N-product is required for indian hedgehog protein N-product multimerization and full activity. As to expression, expressed in the marginal zone at early gastrulation. At stage 14, expression begins in the neural plate with expression becoming more prominent in the anterodorsal area at neural tube closure. At this stage, also expressed diffusely in the somitic and pre-somitic mesoderm. By the early tadpole (stages 28-30), expression is widespread throughout anterior structures with highest levels in the otic vesicle, the eye, and the branchial arches.

Its subcellular location is the cell membrane. The protein resides in the endoplasmic reticulum membrane. It localises to the golgi apparatus membrane. The protein localises to the secreted. It catalyses the reaction glycyl-L-cysteinyl-[protein] + cholesterol + H(+) = [protein]-C-terminal glycyl cholesterol ester + N-terminal L-cysteinyl-[protein]. In terms of biological role, signal involved in the early induction and patterning of anterodorsal ectoderm, nervous system and somites. Induces ectopic cement gland formation in embryos. It is involved in the regulation of endochondral skeleton formation, and the development of retinal pigment epithelium (RPE), photoreceptors and periocular tissues. Its function is as follows. The C-terminal part of the indian hedgehog protein precursor displays an autoproteolysis and a cholesterol transferase activity. Both activities result in the cleavage of the full-length protein into two parts followed by the covalent attachment of a cholesterol moiety to the C-terminal of the newly generated N-product. Both activities occur in the endoplasmic reticulum. Functionally, the dually lipidated indian hedgehog protein N-product is a morphogen which is essential for a variety of patterning events during development. Binds to the patched (PTCH1) receptor, which functions in association with smoothened (SMO), to activate the transcription of target genes. Signal involved in the early induction and patterning of anterodorsal ectoderm, nervous system and somites. Induces ectopic cement gland formation in embryos. The sequence is that of Indian hedgehog protein from Xenopus laevis (African clawed frog).